The following is a 257-amino-acid chain: Snake venom serine proteinase 11 (257 aa).

A signal peptide spans 1-18 (MVLIRVLANLLILQLSYA). Positions 19–24 (QKSSEL) are excised as a propeptide. One can recognise a Peptidase S1 domain in the interval 25–248 (VVGGDECNIN…YTEWIQSIIT (224 aa)). Disulfide bonds link C31–C162, C49–C65, C97–C255, C141–C209, C173–C188, and C199–C224. Active-site charge relay system residues include H64 and D109. N-linked (GlcNAc...) asparagine glycosylation is present at N120. Catalysis depends on S203, which acts as the Charge relay system.

The protein belongs to the peptidase S1 family. Snake venom subfamily. As to quaternary structure, monomer. In terms of tissue distribution, expressed by the venom gland.

It is found in the secreted. Functionally, snake venom serine protease that may act in the hemostasis system of the prey. The polypeptide is Snake venom serine proteinase 11 (Crotalus adamanteus (Eastern diamondback rattlesnake)).